A 282-amino-acid polypeptide reads, in one-letter code: Protein N-terminal and lysine N-methyltransferase efm7 (282 aa).

Residues 1–13 (MSKPEEVVNHVPE) are compositionally biased toward basic and acidic residues. Residues 1 to 32 (MSKPEEVVNHVPEDEGSDIEAGGLFEDPPDFY) are disordered. S-adenosyl-L-methionine is bound by residues W67, 93–95 (GAA), D115, W152, and A179.

This sequence belongs to the class I-like SAM-binding methyltransferase superfamily. EFM7 family.

It localises to the cytoplasm. Its function is as follows. S-adenosyl-L-methionine-dependent protein methyltransferase that trimethylates the N-terminal glycine 'Gly-2' of elongation factor 1-alpha, before also catalyzing the mono- and dimethylation of 'Lys-3'. The polypeptide is Protein N-terminal and lysine N-methyltransferase efm7 (nnt-1) (Neurospora crassa (strain ATCC 24698 / 74-OR23-1A / CBS 708.71 / DSM 1257 / FGSC 987)).